Consider the following 718-residue polypeptide: Methionine--tRNA ligase (718 aa).

The 'HIGH' region motif lies at 27 to 37 (PYANGQIHIGH). Residues C158, C161, C171, and C174 each contribute to the Zn(2+) site. Residues 348–352 (KMSKS) carry the 'KMSKS' region motif. K351 lines the ATP pocket. The tRNA-binding domain maps to 612 to 718 (DFAKIDLRIA…SGAKPGMRVK (107 aa)).

Belongs to the class-I aminoacyl-tRNA synthetase family. MetG type 1 subfamily. In terms of assembly, homodimer. Zn(2+) is required as a cofactor.

It localises to the cytoplasm. It carries out the reaction tRNA(Met) + L-methionine + ATP = L-methionyl-tRNA(Met) + AMP + diphosphate. Is required not only for elongation of protein synthesis but also for the initiation of all mRNA translation through initiator tRNA(fMet) aminoacylation. The sequence is that of Methionine--tRNA ligase from Burkholderia cenocepacia (strain ATCC BAA-245 / DSM 16553 / LMG 16656 / NCTC 13227 / J2315 / CF5610) (Burkholderia cepacia (strain J2315)).